We begin with the raw amino-acid sequence, 160 residues long: Crossover junction endodeoxyribonuclease RuvC (160 aa).

Residues D9, E68, and D141 contribute to the active site. D9, E68, and D141 together coordinate Mg(2+).

This sequence belongs to the RuvC family. As to quaternary structure, homodimer which binds Holliday junction (HJ) DNA. The HJ becomes 2-fold symmetrical on binding to RuvC with unstacked arms; it has a different conformation from HJ DNA in complex with RuvA. In the full resolvosome a probable DNA-RuvA(4)-RuvB(12)-RuvC(2) complex forms which resolves the HJ. The cofactor is Mg(2+).

It localises to the cytoplasm. The catalysed reaction is Endonucleolytic cleavage at a junction such as a reciprocal single-stranded crossover between two homologous DNA duplexes (Holliday junction).. Functionally, the RuvA-RuvB-RuvC complex processes Holliday junction (HJ) DNA during genetic recombination and DNA repair. Endonuclease that resolves HJ intermediates. Cleaves cruciform DNA by making single-stranded nicks across the HJ at symmetrical positions within the homologous arms, yielding a 5'-phosphate and a 3'-hydroxyl group; requires a central core of homology in the junction. The consensus cleavage sequence is 5'-(A/T)TT(C/G)-3'. Cleavage occurs on the 3'-side of the TT dinucleotide at the point of strand exchange. HJ branch migration catalyzed by RuvA-RuvB allows RuvC to scan DNA until it finds its consensus sequence, where it cleaves and resolves the cruciform DNA. The chain is Crossover junction endodeoxyribonuclease RuvC from Campylobacter jejuni subsp. jejuni serotype O:2 (strain ATCC 700819 / NCTC 11168).